Reading from the N-terminus, the 179-residue chain is Large ribosomal subunit protein uL6 (179 aa).

Belongs to the universal ribosomal protein uL6 family. In terms of assembly, part of the 50S ribosomal subunit.

Functionally, this protein binds to the 23S rRNA, and is important in its secondary structure. It is located near the subunit interface in the base of the L7/L12 stalk, and near the tRNA binding site of the peptidyltransferase center. The polypeptide is Large ribosomal subunit protein uL6 (Clostridium novyi (strain NT)).